A 429-amino-acid chain; its full sequence is Gamma-glutamyl phosphate reductase (429 aa).

It belongs to the gamma-glutamyl phosphate reductase family.

Its subcellular location is the cytoplasm. The catalysed reaction is L-glutamate 5-semialdehyde + phosphate + NADP(+) = L-glutamyl 5-phosphate + NADPH + H(+). It participates in amino-acid biosynthesis; L-proline biosynthesis; L-glutamate 5-semialdehyde from L-glutamate: step 2/2. Its function is as follows. Catalyzes the NADPH-dependent reduction of L-glutamate 5-phosphate into L-glutamate 5-semialdehyde and phosphate. The product spontaneously undergoes cyclization to form 1-pyrroline-5-carboxylate. The chain is Gamma-glutamyl phosphate reductase from Rhizorhabdus wittichii (strain DSM 6014 / CCUG 31198 / JCM 15750 / NBRC 105917 / EY 4224 / RW1) (Sphingomonas wittichii).